We begin with the raw amino-acid sequence, 585 residues long: Proline--tRNA ligase (585 aa).

This sequence belongs to the class-II aminoacyl-tRNA synthetase family. ProS type 1 subfamily. In terms of assembly, homodimer.

The protein resides in the cytoplasm. It catalyses the reaction tRNA(Pro) + L-proline + ATP = L-prolyl-tRNA(Pro) + AMP + diphosphate. Functionally, catalyzes the attachment of proline to tRNA(Pro) in a two-step reaction: proline is first activated by ATP to form Pro-AMP and then transferred to the acceptor end of tRNA(Pro). As ProRS can inadvertently accommodate and process non-cognate amino acids such as alanine and cysteine, to avoid such errors it has two additional distinct editing activities against alanine. One activity is designated as 'pretransfer' editing and involves the tRNA(Pro)-independent hydrolysis of activated Ala-AMP. The other activity is designated 'posttransfer' editing and involves deacylation of mischarged Ala-tRNA(Pro). The misacylated Cys-tRNA(Pro) is not edited by ProRS. The chain is Proline--tRNA ligase from Cutibacterium acnes (strain DSM 16379 / KPA171202) (Propionibacterium acnes).